The sequence spans 193 residues: Epididymal-specific lipocalin-12 (193 aa).

The first 19 residues, 1 to 19 (MGPWWALWLILTLPQILES), serve as a signal peptide directing secretion. A disulfide bond links C88 and C193. Residues N143 and N172 are each glycosylated (N-linked (GlcNAc...) asparagine).

Belongs to the calycin superfamily. Lipocalin family. Monomer. Expressed in epididymis.

It localises to the secreted. Binds all-trans retinoic acid and may act as a retinoid carrier protein within the epididymis. May play a role in male fertility. The protein is Epididymal-specific lipocalin-12 (Lcn12) of Mus musculus (Mouse).